A 150-amino-acid chain; its full sequence is Photosystem II extrinsic protein V (150 aa).

The signal sequence occupies residues 1–20 (MIRVIMLLVLVWMTPMISWA). Heme c contacts are provided by C50, C53, H54, and H105.

The protein belongs to the cytochrome c family. PsbV subfamily. In terms of assembly, PSII is composed of 1 copy each of membrane proteins PsbA, PsbB, PsbC, PsbD, PsbE, PsbF, PsbH, PsbI, PsbJ, PsbK, PsbL, PsbM, PsbT, PsbY, PsbZ, Psb30/Ycf12, at least 3 peripheral proteins of the oxygen-evolving complex and a large number of cofactors. It forms dimeric complexes. The extrinsic subunits in red algae are PsbO (OEC33), PsbQ', cytochrome c-550 and PsbU. Requires heme c as cofactor.

Its subcellular location is the plastid. It is found in the chloroplast thylakoid membrane. One of the extrinsic, lumenal subunits of photosystem II (PSII). PSII is a light-driven water plastoquinone oxidoreductase, using light energy to abstract electrons from H(2)O, generating a proton gradient subsequently used for ATP formation. The extrinsic proteins stabilize the structure of photosystem II oxygen-evolving complex (OEC), the ion environment of oxygen evolution and protect the OEC against heat-induced inactivation. In Cyanidioschyzon merolae (strain NIES-3377 / 10D) (Unicellular red alga), this protein is Photosystem II extrinsic protein V.